Here is an 886-residue protein sequence, read N- to C-terminus: DNA mismatch repair protein MutS (886 aa).

Residue 641–648 coordinates ATP; the sequence is GPNMAGKS.

Belongs to the DNA mismatch repair MutS family.

Its function is as follows. This protein is involved in the repair of mismatches in DNA. It is possible that it carries out the mismatch recognition step. This protein has a weak ATPase activity. In Rickettsia akari (strain Hartford), this protein is DNA mismatch repair protein MutS.